A 221-amino-acid polypeptide reads, in one-letter code: MIHKHETRELVAIEELVMSWIEAFKSLSYFGIFLALSIEFIPAEVVLPLAGYWVSKGDMTLAGVVLAGSLGGVAGPLTLYWIGRYGGRPFLERFGKYLFIKPEALDKSDNFFKKHGGFVAFSGRFLPGIRTLISIPCGIAKMNVWVFSLYTFIAMLPITFVYVYLGVKLGENWKAVGSILDQYMLPIGIAILALFLLYLLMKKRKKRTHSEQLSVFLKNKR.

Helical transmembrane passes span 30–50 (FGIFLALSIEFIPAEVVLPLA), 62–82 (AGVVLAGSLGGVAGPLTLYWI), 144–164 (VWVFSLYTFIAMLPITFVYVY), and 179–199 (ILDQYMLPIGIAILALFLLYL).

Belongs to the DedA family.

Its subcellular location is the cell membrane. This is an uncharacterized protein from Bacillus subtilis (strain 168).